We begin with the raw amino-acid sequence, 322 residues long: Cyclin mcs2 (322 aa).

Ser-310 is modified (phosphoserine).

Belongs to the cyclin family. Cyclin C subfamily. As to quaternary structure, one of the nine subunits forming the core-TFIIH basal transcription factor. Interacts with crk1 and skp1.

It localises to the nucleus. Its function is as follows. Essential for progression through the cell cycle. Possesses kinase activity that can be detected when myelin basic protein (MBP) is provided as an exogenous substrate. This Schizosaccharomyces pombe (strain 972 / ATCC 24843) (Fission yeast) protein is Cyclin mcs2 (mcs2).